The following is a 299-amino-acid chain: Protease HtpX homolog (299 aa).

Transmembrane regions (helical) follow at residues 14-34 (ILVM…VGYL) and 39-59 (ATGG…IMVG). Position 144 (histidine 144) interacts with Zn(2+). Glutamate 145 is an active-site residue. Histidine 148 serves as a coordination point for Zn(2+). 2 helical membrane-spanning segments follow: residues 159-179 (IALA…NFMW) and 196-216 (VFAI…ATMV). A Zn(2+)-binding site is contributed by glutamate 225.

This sequence belongs to the peptidase M48B family. Requires Zn(2+) as cofactor.

It localises to the cell membrane. This Limosilactobacillus fermentum (strain NBRC 3956 / LMG 18251) (Lactobacillus fermentum) protein is Protease HtpX homolog.